The primary structure comprises 303 residues: N-acetyl-D-glucosamine kinase (303 aa).

ATP contacts are provided by residues 4–11 (GFDIGGTK) and 133–140 (GVGGGLIF). His-157, Cys-177, Cys-179, and Cys-184 together coordinate Zn(2+).

It belongs to the ROK (NagC/XylR) family. NagK subfamily.

The catalysed reaction is N-acetyl-D-glucosamine + ATP = N-acetyl-D-glucosamine 6-phosphate + ADP + H(+). It functions in the pathway cell wall biogenesis; peptidoglycan recycling. Its function is as follows. Catalyzes the phosphorylation of N-acetyl-D-glucosamine (GlcNAc) derived from cell-wall degradation, yielding GlcNAc-6-P. This chain is N-acetyl-D-glucosamine kinase, found in Escherichia coli O157:H7.